Consider the following 215-residue polypeptide: Nascent polypeptide-associated complex subunit alpha (215 aa).

Residues 1–81 are disordered; it reads MPGEATETVP…SEKKARKAMS (81 aa). Over residues 9 to 28 the composition is skewed to polar residues; sequence VPATEQELPQPQAETGSGTE. Acidic residues predominate over residues 29-42; that stretch reads SDSDESVPELEEQD. The residue at position 43 (serine 43) is a Phosphoserine; by ILK1. Low complexity predominate over residues 44 to 57; that stretch reads TQATTQQAQLAAAA. Residues 69 to 80 form a required for DNA-binding region; the sequence is QSRSEKKARKAM. In terms of domain architecture, NAC-A/B spans 70 to 135; sequence SRSEKKARKA…AKIEDLSQQA (66 aa). The interval 93-108 is RNA/DNA-binding; sequence RVTIRKSKNILFVITK. Serine 132 carries the phosphoserine modification. An N6-acetyllysine; alternate modification is found at lysine 142. Residue lysine 142 forms a Glycyl lysine isopeptide (Lys-Gly) (interchain with G-Cter in SUMO2); alternate linkage. Threonine 159 carries the phosphothreonine; by GSK3-beta modification. Threonine 161 is subject to Phosphothreonine. Serine 166, serine 186, serine 191, and serine 203 each carry phosphoserine. One can recognise a UBA domain in the interval 176–213; it reads VEVKDIELVMSQANVSRAKAVRALKNNSNDIVNAIMEL.

It belongs to the NAC-alpha family. Part of the nascent polypeptide-associated complex (NAC), which is a heterodimer of NACA and BTF3 (via NAC-A/B domains). NAC associates with ribosomes through the BTF3/NACB subunit and contacts the ribosomal protein L23, which is positioned near the exiting site. Both subunits can contact nascent polypeptide chains. NACA may also form homodimers, and only this form binds DNA. Interacts with TBP and JUN. Post-translationally, phosphorylation of Ser-43 by ILK during cell adhesion may promote nuclear localization. Phosphorylation of Thr-159 by GSK3B may promote proteasome mediated degradation.

Its subcellular location is the cytoplasm. It is found in the nucleus. Functionally, prevents inappropriate targeting of non-secretory polypeptides to the endoplasmic reticulum (ER). Binds to nascent polypeptide chains as they emerge from the ribosome and blocks their interaction with the signal recognition particle (SRP), which normally targets nascent secretory peptides to the ER. Also reduces the inherent affinity of ribosomes for protein translocation sites in the ER membrane (M sites). May act as a specific coactivator for JUN, binding to DNA and stabilizing the interaction of JUN homodimers with target gene promoters. The sequence is that of Nascent polypeptide-associated complex subunit alpha (NACA) from Pongo abelii (Sumatran orangutan).